Here is a 579-residue protein sequence, read N- to C-terminus: Probable cytochrome c oxidase subunit 1-alpha (579 aa).

Positions 1–21 (MSILNEPQGAAAAEDSYENEL) are disordered. Residues 44–64 (IGTLYLVTSFAFFCIGGVMAL) traverse the membrane as a helical segment. His-90 contacts Fe(II)-heme a. Helical transmembrane passes span 93–113 (IMLL…IMPL), 125–145 (LNMF…GGFL), 174–194 (MWIM…VNFI), 217–237 (VLLT…ALFA), 262–282 (LFWF…FGII), and 295–315 (FGYM…VTVW). Cu cation contacts are provided by His-268 and Tyr-272. Positions 268-272 (HPEVY) form a cross-link, 1'-histidyl-3'-tyrosine (His-Tyr). Residues His-317 and His-318 each coordinate Cu cation. The next 5 helical transmembrane spans lie at 319 to 339 (MYVT…LIAV), 363 to 383 (MLWA…GVIL), 397 to 417 (FVVA…MFSG), 437 to 457 (ITFW…HWLG), and 480 to 500 (ISTI…YNVW). Residue His-401 coordinates heme a3. A Fe(II)-heme a-binding site is contributed by His-403.

Belongs to the heme-copper respiratory oxidase family. As to quaternary structure, associates with subunits II, III and IV to form cytochrome c oxidase. Cu(2+) serves as cofactor. Heme is required as a cofactor.

It is found in the cell membrane. It catalyses the reaction 4 Fe(II)-[cytochrome c] + O2 + 8 H(+)(in) = 4 Fe(III)-[cytochrome c] + 2 H2O + 4 H(+)(out). It participates in energy metabolism; oxidative phosphorylation. Functionally, cytochrome c oxidase is the component of the respiratory chain that catalyzes the reduction of oxygen to water. Subunits 1-3 form the functional core of the enzyme complex. CO I is the catalytic subunit of the enzyme. Electrons originating in cytochrome c are transferred via the copper A center of subunit 2 and heme A of subunit 1 to the bimetallic center formed by heme A3 and copper B. The polypeptide is Probable cytochrome c oxidase subunit 1-alpha (ctaD1) (Streptomyces avermitilis (strain ATCC 31267 / DSM 46492 / JCM 5070 / NBRC 14893 / NCIMB 12804 / NRRL 8165 / MA-4680)).